The chain runs to 329 residues: Short-chain dehydrogenase/reductase tropG (329 aa).

Positions 57, 86, 113, 203, and 207 each coordinate NADP(+). Y203 acts as the Proton acceptor in catalysis. Catalysis depends on K207, which acts as the Lowers pKa of active site Tyr.

It belongs to the short-chain dehydrogenases/reductases (SDR) family.

Its pathway is secondary metabolite biosynthesis. Functionally, short-chain dehydrogenase/reductase; part of the gene cluster that mediates the biosynthesis of the tropolone class of fungal maleic anhydrides. The pathway begins with the synthesis of 3-methylorcinaldehyde by the non-reducing polyketide synthase (PKS) tropA. 3-methylorcinaldehyde is the substrate for the FAD-dependent monooxygenase tropB to yield a dearomatized hydroxycyclohexadione. The 2-oxoglutarate-dependent dioxygenase tropC then performs the oxidative ring expansion to provide the first tropolone metabolite stipitaldehyde. Trop D converts stipitaldehyde into stipitacetal which is in turn converted to stipitalide by the short-chain dehydrogenase/reductase tropE. The next steps involve tropF, tropG, tropH, tropI and tropJ to form successive tropolone maleic anhydrides including stipitaldehydic, stipitatonic and stipitatic acids. This chain is Short-chain dehydrogenase/reductase tropG, found in Talaromyces stipitatus (strain ATCC 10500 / CBS 375.48 / QM 6759 / NRRL 1006) (Penicillium stipitatum).